Reading from the N-terminus, the 185-residue chain is Elongation factor P (185 aa).

Belongs to the elongation factor P family.

It localises to the cytoplasm. The protein operates within protein biosynthesis; polypeptide chain elongation. Involved in peptide bond synthesis. Stimulates efficient translation and peptide-bond synthesis on native or reconstituted 70S ribosomes in vitro. Probably functions indirectly by altering the affinity of the ribosome for aminoacyl-tRNA, thus increasing their reactivity as acceptors for peptidyl transferase. The protein is Elongation factor P of Deinococcus geothermalis (strain DSM 11300 / CIP 105573 / AG-3a).